The following is a 209-amino-acid chain: Transmembrane domain-containing protein TMIGD3 (209 aa).

A signal peptide spans 1-15; that stretch reads MEFLLLLSLALFSDA. Residues 152 to 172 form a helical membrane-spanning segment; sequence SILIICILITSLGIIFIISHL. Residues 179 to 201 form a disordered region; it reads QRNREVTGKSISRNPQASQGPSM. The segment covering 187–201 has biased composition (polar residues); sequence KSISRNPQASQGPSM.

It is found in the membrane. This Mus musculus (Mouse) protein is Transmembrane domain-containing protein TMIGD3 (Tmigd3).